The sequence spans 1544 residues: Zinc finger protein GLI2 (1544 aa).

Residues 1–26 (METSAPAPALEKKEAKSGLLEDSSFP) form a disordered region. Phosphoserine is present on residues S145, S230, S232, and S238. The segment at 338 to 364 (SSSSSNCLNDANQNKQNSESAVSSTVN) is disordered. S385 is subject to Phosphoserine; by DYRK2. Residues 417-444 (TNCHWADCTKEYDTQEQLVHHINNEHIH) form a C2H2-type 1 zinc finger. The segment at 455 to 477 (QACTREQKPFKAQYMLVVHMRRH) adopts a C2H2-type 2; degenerate zinc-finger fold. C2H2-type zinc fingers lie at residues 483–507 (HKCT…LRSH), 513–538 (YVCE…NRTH), and 544–569 (YICK…KTVH). 2 disordered regions span residues 557–619 (DPSS…TSHT) and 635–682 (GLCQ…ALAD). A compositionally biased stretch (basic and acidic residues) spans 569 to 585 (HGPDAHVTKKQRNDVHV). A compositionally biased stretch (low complexity) spans 637–657 (CQSSPGAQSSCSSEPSPLGSA). S707 bears the Phosphoserine mark. T708 is modified (phosphothreonine). Position 740 is an N6-acetyllysine; by EP300 (K740). Disordered regions lie at residues 781–800 (SQLQ…AYTV), 805–861 (SGIS…PGLL), 908–963 (ALPG…RRPD), 995–1016 (VQSH…RPPS), 1166–1220 (FGQY…CLGM), and 1422–1457 (GGCP…VSST). Composition is skewed to polar residues over residues 790 to 800 (STSTMSSAYTV) and 805 to 814 (SGISPYFSSR). Residues 954–963 (RASDPVRRPD) are compositionally biased toward basic and acidic residues. S997 carries the phosphoserine; by DYRK2 modification. Polar residues-rich tracts occupy residues 997–1009 (SHPS…TRNA), 1173–1190 (NPQS…TQPH), and 1200–1209 (SRGSYTQQPR).

Belongs to the GLI C2H2-type zinc-finger protein family. In terms of assembly, interacts with ZIC1 and ZIC2. Interacts with STK36. Interacts with SUFU; this inhibits transcriptional activation mediated by GLI2. Interacts (via C-terminal internal region) with FOXC1 (via N-terminus); this interaction is direct and increases GLI2 DNA-binding and transcriptional activity through a smoothened (SMO)-independent Hedgehog (Hh) signaling pathway. Post-translationally, phosphorylated in vitro by ULK3. Phosphorylated by DYRK2; this inhibits GLI2 transcription factor activity and promotes proteasomal degradation of GLI2. In terms of processing, acetylation at Lys-740 inhibits Hh target gene expression, probably by impeding entry into chromatin thus preventing promoter occupancy.

The protein resides in the nucleus. The protein localises to the cytoplasm. Its subcellular location is the cell projection. It is found in the cilium. In terms of biological role, functions as a transcription regulator in the hedgehog (Hh) pathway. Functions as a transcriptional activator. May also function as transcriptional repressor. Requires STK36 for full transcriptional activator activity. Binds to the DNA sequence 5'-GAACCACCCA-3' which is part of the TRE-2S regulatory element. Is involved in the smoothened (SHH) signaling pathway. Required for normal skeleton development. The polypeptide is Zinc finger protein GLI2 (Mus musculus (Mouse)).